Consider the following 543-residue polypeptide: Phosphatidylinositol/phosphatidylcholine transfer protein SFH12 (543 aa).

Residues 120-294 form the CRAL-TRIO domain; it reads EIDEVLKYYP…FLGGSCTCAD (175 aa). The disordered stretch occupies residues 316 to 356; it reads HNGDHKCSKGSQAENSGEKTIPEEDDSTTEPASEEEKASKE. A coiled-coil region spans residues 490-526; the sequence is DKEEMLNAAISRSNVLEQELAATKKALDDSLGRQEEL.

The protein belongs to the SFH family. As to expression, specifically expressed in flowers.

It is found in the golgi apparatus membrane. The protein resides in the cell membrane. Required for transport of secretory proteins from the Golgi complex. Catalyzes the transfer of phosphatidylinositol and phosphatidylcholine between membranes in vitro. This Arabidopsis thaliana (Mouse-ear cress) protein is Phosphatidylinositol/phosphatidylcholine transfer protein SFH12 (SFH12).